We begin with the raw amino-acid sequence, 249 residues long: Coproheme decarboxylase (249 aa).

Residues Arg-131, 145–149 (YPMDK), His-172, and Gln-185 each bind Fe-coproporphyrin III. Tyr-145 is a catalytic residue.

It belongs to the ChdC family. Type 1 subfamily. The cofactor is Fe-coproporphyrin III.

The catalysed reaction is Fe-coproporphyrin III + 2 H2O2 + 2 H(+) = heme b + 2 CO2 + 4 H2O. The enzyme catalyses Fe-coproporphyrin III + H2O2 + H(+) = harderoheme III + CO2 + 2 H2O. It catalyses the reaction harderoheme III + H2O2 + H(+) = heme b + CO2 + 2 H2O. It participates in porphyrin-containing compound metabolism; protoheme biosynthesis. Its function is as follows. Involved in coproporphyrin-dependent heme b biosynthesis. Catalyzes the decarboxylation of Fe-coproporphyrin III (coproheme) to heme b (protoheme IX), the last step of the pathway. The reaction occurs in a stepwise manner with a three-propionate intermediate. This is Coproheme decarboxylase from Staphylococcus haemolyticus (strain JCSC1435).